Reading from the N-terminus, the 606-residue chain is Aspartate--tRNA(Asp/Asn) ligase (606 aa).

Glutamate 177 lines the L-aspartate pocket. The segment at 201–204 (QLFK) is aspartate. Position 223 (arginine 223) interacts with L-aspartate. ATP is bound by residues 223-225 (RDE) and glutamine 232. Histidine 461 provides a ligand contact to L-aspartate. Glutamate 499 is an ATP binding site. Arginine 506 contributes to the L-aspartate binding site. 551 to 554 (GLDR) is a binding site for ATP.

It belongs to the class-II aminoacyl-tRNA synthetase family. Type 1 subfamily. Homodimer.

It is found in the cytoplasm. The enzyme catalyses tRNA(Asx) + L-aspartate + ATP = L-aspartyl-tRNA(Asx) + AMP + diphosphate. Its function is as follows. Aspartyl-tRNA synthetase with relaxed tRNA specificity since it is able to aspartylate not only its cognate tRNA(Asp) but also tRNA(Asn). Reaction proceeds in two steps: L-aspartate is first activated by ATP to form Asp-AMP and then transferred to the acceptor end of tRNA(Asp/Asn). This is Aspartate--tRNA(Asp/Asn) ligase from Prochlorococcus marinus (strain NATL2A).